Consider the following 161-residue polypeptide: Phosphopantetheine adenylyltransferase (161 aa).

Residue S9 coordinates substrate. ATP contacts are provided by residues 9-10 (SF) and H17. 3 residues coordinate substrate: K41, T73, and R87. Residues 88–90 (GLR), E98, and 123–129 (YSFISST) each bind ATP.

This sequence belongs to the bacterial CoaD family. In terms of assembly, homohexamer. Mg(2+) serves as cofactor.

It is found in the cytoplasm. The catalysed reaction is (R)-4'-phosphopantetheine + ATP + H(+) = 3'-dephospho-CoA + diphosphate. The protein operates within cofactor biosynthesis; coenzyme A biosynthesis; CoA from (R)-pantothenate: step 4/5. In terms of biological role, reversibly transfers an adenylyl group from ATP to 4'-phosphopantetheine, yielding dephospho-CoA (dPCoA) and pyrophosphate. This chain is Phosphopantetheine adenylyltransferase, found in Desulforamulus reducens (strain ATCC BAA-1160 / DSM 100696 / MI-1) (Desulfotomaculum reducens).